The primary structure comprises 376 residues: GTPase Obg (376 aa).

The Obg domain maps to 1-158 (MFIDSVNLTL…RDVRLELKLI (158 aa)). The OBG-type G domain maps to 159–359 (ADVGLVGFPN…LKFSLLELLK (201 aa)). GTP-binding positions include 165–172 (GFPNVGKS), 190–194 (FTTLT), 212–215 (DIPG), 280–283 (TRMD), and 340–342 (SSA). 2 residues coordinate Mg(2+): Ser-172 and Thr-192.

This sequence belongs to the TRAFAC class OBG-HflX-like GTPase superfamily. OBG GTPase family. In terms of assembly, monomer. Mg(2+) serves as cofactor.

It localises to the cytoplasm. Functionally, an essential GTPase which binds GTP, GDP and possibly (p)ppGpp with moderate affinity, with high nucleotide exchange rates and a fairly low GTP hydrolysis rate. Plays a role in control of the cell cycle, stress response, ribosome biogenesis and in those bacteria that undergo differentiation, in morphogenesis control. This is GTPase Obg from Campylobacter curvus (strain 525.92).